A 901-amino-acid polypeptide reads, in one-letter code: Protein translocase subunit SecA (901 aa).

Residues Q87, G105–T109, and D512 contribute to the ATP site. Positions Q853–S901 are disordered. Residues C885, C887, C896, and H897 each coordinate Zn(2+). Basic residues predominate over residues K891–S901.

It belongs to the SecA family. In terms of assembly, monomer and homodimer. Part of the essential Sec protein translocation apparatus which comprises SecA, SecYEG and auxiliary proteins SecDF-YajC and YidC. The cofactor is Zn(2+).

The protein localises to the cell inner membrane. Its subcellular location is the cytoplasm. The catalysed reaction is ATP + H2O + cellular proteinSide 1 = ADP + phosphate + cellular proteinSide 2.. In terms of biological role, part of the Sec protein translocase complex. Interacts with the SecYEG preprotein conducting channel. Has a central role in coupling the hydrolysis of ATP to the transfer of proteins into and across the cell membrane, serving both as a receptor for the preprotein-SecB complex and as an ATP-driven molecular motor driving the stepwise translocation of polypeptide chains across the membrane. This Enterobacter sp. (strain 638) protein is Protein translocase subunit SecA.